A 181-amino-acid chain; its full sequence is Dual-action ribosomal maturation protein DarP (181 aa).

A disordered region spans residues 1 to 23 (MTGIKKPMSQYQDDNELEDWGPS).

It belongs to the DarP family.

It is found in the cytoplasm. Member of a network of 50S ribosomal subunit biogenesis factors which assembles along the 30S-50S interface, preventing incorrect 23S rRNA structures from forming. Promotes peptidyl transferase center (PTC) maturation. In Aeromonas salmonicida (strain A449), this protein is Dual-action ribosomal maturation protein DarP.